The primary structure comprises 66 residues: Large ribosomal subunit protein bL33 (66 aa).

Belongs to the bacterial ribosomal protein bL33 family.

The chain is Large ribosomal subunit protein bL33 from Wolbachia sp. subsp. Brugia malayi (strain TRS).